The sequence spans 247 residues: uncharacterized protein (247 aa).

The protein belongs to the AIM2 family.

The protein resides in the cytoplasm. It is found in the nucleus. This is an uncharacterized protein from Schizosaccharomyces pombe (strain 972 / ATCC 24843) (Fission yeast).